Reading from the N-terminus, the 1279-residue chain is ATP-dependent helicase/nuclease subunit A (1279 aa).

In terms of domain architecture, UvrD-like helicase ATP-binding spans 4–499 (TKWTDEQRQA…VKLFKNFRSR (496 aa)). 25–32 (AGAGAGKT) provides a ligand contact to ATP. The region spanning 526–853 (EEALKVGASY…RIMSIHKSKG (328 aa)) is the UvrD-like helicase C-terminal domain.

The protein belongs to the helicase family. AddA subfamily. Heterodimer of AddA and AddB/RexB. It depends on Mg(2+) as a cofactor.

The catalysed reaction is Couples ATP hydrolysis with the unwinding of duplex DNA by translocating in the 3'-5' direction.. It catalyses the reaction ATP + H2O = ADP + phosphate + H(+). Functionally, the heterodimer acts as both an ATP-dependent DNA helicase and an ATP-dependent, dual-direction single-stranded exonuclease. Recognizes the chi site generating a DNA molecule suitable for the initiation of homologous recombination. The AddA nuclease domain is required for chi fragment generation; this subunit has the helicase and 3' -&gt; 5' nuclease activities. In Clostridium botulinum (strain Okra / Type B1), this protein is ATP-dependent helicase/nuclease subunit A.